The chain runs to 938 residues: Isoleucine--tRNA ligase (938 aa).

Positions 61–71 match the 'HIGH' region motif; the sequence is PYANGDIHLGT. An L-isoleucyl-5'-AMP-binding site is contributed by Glu-559. Positions 601–605 match the 'KMSKS' region motif; sequence KMSKS. Lys-604 serves as a coordination point for ATP. Zn(2+) is bound by residues Cys-904, Cys-907, Cys-923, and Cys-926.

Belongs to the class-I aminoacyl-tRNA synthetase family. IleS type 1 subfamily. Monomer. Zn(2+) serves as cofactor.

Its subcellular location is the cytoplasm. The catalysed reaction is tRNA(Ile) + L-isoleucine + ATP = L-isoleucyl-tRNA(Ile) + AMP + diphosphate. Functionally, catalyzes the attachment of isoleucine to tRNA(Ile). As IleRS can inadvertently accommodate and process structurally similar amino acids such as valine, to avoid such errors it has two additional distinct tRNA(Ile)-dependent editing activities. One activity is designated as 'pretransfer' editing and involves the hydrolysis of activated Val-AMP. The other activity is designated 'posttransfer' editing and involves deacylation of mischarged Val-tRNA(Ile). The chain is Isoleucine--tRNA ligase from Symbiobacterium thermophilum (strain DSM 24528 / JCM 14929 / IAM 14863 / T).